We begin with the raw amino-acid sequence, 569 residues long: Urease subunit alpha (569 aa).

The 439-residue stretch at 131 to 569 folds into the Urease domain; it reads GGIDTHIHFI…LPLAQRYLLL (439 aa). H136, H138, and K219 together coordinate Ni(2+). K219 carries the N6-carboxylysine modification. H221 is a binding site for substrate. Positions 248 and 274 each coordinate Ni(2+). The Proton donor role is filled by H322. D362 serves as a coordination point for Ni(2+).

Belongs to the metallo-dependent hydrolases superfamily. Urease alpha subunit family. Heterotrimer of UreA (gamma), UreB (beta) and UreC (alpha) subunits. Three heterotrimers associate to form the active enzyme. Requires Ni cation as cofactor. Carboxylation allows a single lysine to coordinate two nickel ions.

Its subcellular location is the cytoplasm. It catalyses the reaction urea + 2 H2O + H(+) = hydrogencarbonate + 2 NH4(+). Its pathway is nitrogen metabolism; urea degradation; CO(2) and NH(3) from urea (urease route): step 1/1. The chain is Urease subunit alpha from Synechococcus sp. (strain CC9311).